The chain runs to 162 residues: Globin CTT-VIIB-7 (162 aa).

Positions Met-1–Ala-16 are cleaved as a signal peptide. The Globin domain occupies Pro-18–Glu-162. Residues His-76 and His-111 each coordinate heme b.

The protein belongs to the globin family. In terms of assembly, homodimer.

The polypeptide is Globin CTT-VIIB-7 (CTT-7B7) (Chironomus thummi piger (Midge)).